The sequence spans 662 residues: Protein-arginine deiminase type-1 (662 aa).

Ca(2+) contacts are provided by asparagine 153, aspartate 155, aspartate 157, aspartate 164, aspartate 175, aspartate 178, glutamine 350, glutamate 352, lysine 363, aspartate 370, serine 371, asparagine 374, phenylalanine 408, and leucine 411. The active-site Nucleophile is cysteine 644.

This sequence belongs to the protein arginine deiminase family. In terms of assembly, monomer. The cofactor is Ca(2+). In terms of tissue distribution, expressed only in the epidermis and uterus.

It is found in the cytoplasm. The enzyme catalyses L-arginyl-[protein] + H2O = L-citrullyl-[protein] + NH4(+). Its function is as follows. Catalyzes the deimination of arginine residues of proteins. This Mus musculus (Mouse) protein is Protein-arginine deiminase type-1 (Padi1).